The following is a 179-amino-acid chain: Low molecular weight phosphotyrosine protein phosphatase (179 aa).

The active-site Nucleophile is C15. Residue R21 is part of the active site. D148 functions as the Proton donor in the catalytic mechanism.

Belongs to the low molecular weight phosphotyrosine protein phosphatase family.

The protein resides in the cytoplasm. The enzyme catalyses O-phospho-L-tyrosyl-[protein] + H2O = L-tyrosyl-[protein] + phosphate. It carries out the reaction a phosphate monoester + H2O = an alcohol + phosphate. Functionally, acts on tyrosine phosphorylated proteins, low-MW aryl phosphates and natural and synthetic acyl phosphates. The protein is Low molecular weight phosphotyrosine protein phosphatase (acp1) of Dictyostelium discoideum (Social amoeba).